A 194-amino-acid chain; its full sequence is PRELI domain containing protein 3B (194 aa).

The PRELI/MSF1 domain occupies 1 to 172; the sequence is MKIWTSEHVF…VIHKLNAEIE (172 aa). Residues Ser46 and Ser51 each carry the phosphoserine modification.

This sequence belongs to the slowmo family.

This chain is PRELI domain containing protein 3B (PRELID3B), found in Homo sapiens (Human).